The following is a 414-amino-acid chain: Probable protein phosphatase 2C 9 (414 aa).

Residues Thr15–Asp37 form a helical membrane-spanning segment. The tract at residues Leu56–Glu95 is disordered. The 312-residue stretch at Arg99–Leu410 folds into the PPM-type phosphatase domain. Positions 136 and 137 each coordinate Mn(2+). Over residues Gly186–Asp195 the composition is skewed to basic and acidic residues. Residues Gly186–Ala212 are disordered. A Mn(2+)-binding site is contributed by Asp319. The tract at residues Ala345–Gly372 is disordered. A compositionally biased stretch (low complexity) spans Ser355 to Ser369. Residue Asp401 coordinates Mn(2+).

The protein belongs to the PP2C family. Mg(2+) serves as cofactor. The cofactor is Mn(2+).

Its subcellular location is the membrane. It carries out the reaction O-phospho-L-seryl-[protein] + H2O = L-seryl-[protein] + phosphate. It catalyses the reaction O-phospho-L-threonyl-[protein] + H2O = L-threonyl-[protein] + phosphate. This chain is Probable protein phosphatase 2C 9, found in Oryza sativa subsp. japonica (Rice).